A 260-amino-acid chain; its full sequence is Hydroxyacylglutathione hydrolase (260 aa).

Zn(2+)-binding residues include His66, His68, Asp70, His71, His125, Asp150, and His188.

This sequence belongs to the metallo-beta-lactamase superfamily. Glyoxalase II family. As to quaternary structure, monomer. The cofactor is Zn(2+).

It carries out the reaction an S-(2-hydroxyacyl)glutathione + H2O = a 2-hydroxy carboxylate + glutathione + H(+). It functions in the pathway secondary metabolite metabolism; methylglyoxal degradation; (R)-lactate from methylglyoxal: step 2/2. Thiolesterase that catalyzes the hydrolysis of S-D-lactoyl-glutathione to form glutathione and D-lactic acid. This Prochlorococcus marinus (strain MIT 9303) protein is Hydroxyacylglutathione hydrolase.